Here is a 296-residue protein sequence, read N- to C-terminus: NAD kinase (296 aa).

Asp74 acts as the Proton acceptor in catalysis. NAD(+) contacts are provided by residues 74 to 75 (DG), 148 to 149 (ND), Arg176, Asp178, and 189 to 194 (TAYALS).

It belongs to the NAD kinase family. It depends on a divalent metal cation as a cofactor.

Its subcellular location is the cytoplasm. The enzyme catalyses NAD(+) + ATP = ADP + NADP(+) + H(+). Involved in the regulation of the intracellular balance of NAD and NADP, and is a key enzyme in the biosynthesis of NADP. Catalyzes specifically the phosphorylation on 2'-hydroxyl of the adenosine moiety of NAD to yield NADP. This is NAD kinase from Nitrosomonas eutropha (strain DSM 101675 / C91 / Nm57).